We begin with the raw amino-acid sequence, 218 residues long: Guanylate kinase (218 aa).

One can recognise a Guanylate kinase-like domain in the interval 15-194 (GMMLVLSSPS…SIADVRAILR (180 aa)). ATP is bound at residue 22–29 (SPSGAGKT).

The protein belongs to the guanylate kinase family.

It is found in the cytoplasm. It catalyses the reaction GMP + ATP = GDP + ADP. Its function is as follows. Essential for recycling GMP and indirectly, cGMP. The chain is Guanylate kinase from Rhodospirillum rubrum (strain ATCC 11170 / ATH 1.1.1 / DSM 467 / LMG 4362 / NCIMB 8255 / S1).